The following is a 607-amino-acid chain: Oligoendopeptidase F homolog (607 aa).

His384 lines the Zn(2+) pocket. The active site involves Glu385. Residues His388 and His391 each coordinate Zn(2+).

The protein belongs to the peptidase M3B family. Zn(2+) is required as a cofactor.

This is Oligoendopeptidase F homolog (pepF) from Mycoplasma genitalium (strain ATCC 33530 / DSM 19775 / NCTC 10195 / G37) (Mycoplasmoides genitalium).